The following is a 203-amino-acid chain: ATP-dependent Clp protease proteolytic subunit (203 aa).

Serine 100 (nucleophile) is an active-site residue. Histidine 125 is an active-site residue.

This sequence belongs to the peptidase S14 family. As to quaternary structure, fourteen ClpP subunits assemble into 2 heptameric rings which stack back to back to give a disk-like structure with a central cavity, resembling the structure of eukaryotic proteasomes.

The protein localises to the cytoplasm. The enzyme catalyses Hydrolysis of proteins to small peptides in the presence of ATP and magnesium. alpha-casein is the usual test substrate. In the absence of ATP, only oligopeptides shorter than five residues are hydrolyzed (such as succinyl-Leu-Tyr-|-NHMec, and Leu-Tyr-Leu-|-Tyr-Trp, in which cleavage of the -Tyr-|-Leu- and -Tyr-|-Trp bonds also occurs).. Cleaves peptides in various proteins in a process that requires ATP hydrolysis. Has a chymotrypsin-like activity. Plays a major role in the degradation of misfolded proteins. The protein is ATP-dependent Clp protease proteolytic subunit of Anaeromyxobacter sp. (strain K).